The following is a 93-amino-acid chain: YcgL domain-containing protein VV1_0131 (93 aa).

The region spanning 1 to 84 (MLCSIYKSSK…PPENLLQQHK (84 aa)) is the YcgL domain. The disordered stretch occupies residues 72–93 (LPPPPENLLQQHKERKAQQKND).

This Vibrio vulnificus (strain CMCP6) protein is YcgL domain-containing protein VV1_0131.